We begin with the raw amino-acid sequence, 169 residues long: Chorismate pyruvate-lyase (169 aa).

4 residues coordinate substrate: Met-35, Arg-77, Leu-115, and Glu-156.

Belongs to the UbiC family. Monomer.

Its subcellular location is the cytoplasm. The catalysed reaction is chorismate = 4-hydroxybenzoate + pyruvate. Its pathway is cofactor biosynthesis; ubiquinone biosynthesis. Functionally, removes the pyruvyl group from chorismate, with concomitant aromatization of the ring, to provide 4-hydroxybenzoate (4HB) for the ubiquinone pathway. This Cronobacter sakazakii (strain ATCC BAA-894) (Enterobacter sakazakii) protein is Chorismate pyruvate-lyase.